We begin with the raw amino-acid sequence, 534 residues long: Lysophosphatidylcholine acyltransferase 1 (534 aa).

The disordered stretch occupies residues 1–25 (MRLRGRGPRAAPSSSSGAGDARRLA). Residues 1–57 (MRLRGRGPRAAPSSSSGAGDARRLAPPGRNPFVHELRLSALQKAQVAFMTLTLFPIR) lie on the Cytoplasmic side of the membrane. Residues 8-19 (PRAAPSSSSGAG) show a composition bias toward low complexity. A helical; Signal-anchor for type II membrane protein transmembrane segment spans residues 58-78 (LLFAAFMMLLAWPFALLASLG). Residues 79-534 (PPDKEPEQPL…GRKNSCKKAD (456 aa)) are Lumenal-facing. The HXXXXD motif motif lies at 135-140 (HSSYFD). EF-hand domains follow at residues 379–414 (PVSD…VCRP) and 451–486 (VSEL…YPDY). Positions 392, 394, 398, and 403 each coordinate Ca(2+). Positions 531-534 (KKAD) match the Di-lysine motif motif.

Belongs to the 1-acyl-sn-glycerol-3-phosphate acyltransferase family. As to expression, predominantly expressed in lung where it is enriched in alveolar type II cells. Expressed at lower levels in spleen and brain. Also detected in erythroleukemic cells and reticulocytes. Weakly or not expressed in other tissues.

It is found in the endoplasmic reticulum membrane. Its subcellular location is the golgi apparatus membrane. The protein resides in the cell membrane. The protein localises to the lipid droplet. The catalysed reaction is a 1-acyl-sn-glycero-3-phosphocholine + an acyl-CoA = a 1,2-diacyl-sn-glycero-3-phosphocholine + CoA. It catalyses the reaction a 1-O-alkyl-sn-glycero-3-phosphocholine + acetyl-CoA = a 1-O-alkyl-2-acetyl-sn-glycero-3-phosphocholine + CoA. The enzyme catalyses a 1-acyl-sn-glycero-3-phosphate + an acyl-CoA = a 1,2-diacyl-sn-glycero-3-phosphate + CoA. It carries out the reaction a 1-O-(1Z-alkenyl)-sn-glycero-3-phosphocholine + an acyl-CoA = a 1-O-(1Z-alkenyl)-2-acyl-sn-glycero-3-phosphocholine + CoA. The catalysed reaction is 1-acyl-sn-glycero-3-phospho-(1'-sn-glycerol) + an acyl-CoA = a 1,2-diacyl-sn-glycero-3-phospho-(1'-sn-glycerol) + CoA. It catalyses the reaction 1-hexadecanoyl-sn-glycero-3-phosphocholine + hexadecanoyl-CoA = 1,2-dihexadecanoyl-sn-glycero-3-phosphocholine + CoA. The enzyme catalyses 1-O-hexadecyl-sn-glycero-3-phosphocholine + hexadecanoyl-CoA = 1-O-hexadecyl-2-hexadecanoyl-sn-glycero-3-phosphocholine + CoA. It carries out the reaction a 1-O-(1Z-alkenyl)-sn-glycero-3-phosphocholine + hexadecanoyl-CoA = 1-O-(1Z)-alkenyl-2-hexadecanoyl-sn-glycero-3-phosphocholine + CoA. The catalysed reaction is 1-hexadecanoyl-sn-glycero-3-phospho-(1'-sn-glycerol) + hexadecanoyl-CoA = 1,2-dihexadecanoyl-sn-glycero-3-phospho-(1'-sn-glycerol) + CoA. It catalyses the reaction 1-dodecanoyl-sn-glycero-3-phosphocholine + hexadecanoyl-CoA = 1-dodecanoyl-2-hexadecanoyl-sn-glycero-3-phosphocholine + CoA. The enzyme catalyses 1-tetradecanoyl-sn-glycero-3-phosphocholine + hexadecanoyl-CoA = 1-tetradecanoyl-2-hexadecanoyl-sn-glycero-3-phosphocholine + CoA. It carries out the reaction 1-O-octadecyl-sn-glycero-3-phosphocholine + hexadecanoyl-CoA = 1-O-octadecyl-2-hexadecanoyl-sn-glycero-3-phosphocholine + CoA. The catalysed reaction is 1-octadecanoyl-sn-glycero-3-phosphocholine + hexadecanoyl-CoA = 1-octadecanoyl-2-hexadecanoyl-sn-glycero-3-phosphocholine + CoA. It catalyses the reaction 1-(9Z-octadecenoyl)-sn-glycero-3-phosphocholine + hexadecanoyl-CoA = 1-(9Z-octadecenoyl)-2-hexadecanoyl-sn-glycero-3-phosphocholine + CoA. The enzyme catalyses 1-eicosanoyl-sn-glycero-3-phosphocholine + hexadecanoyl-CoA = 1-eicosanoyl-2-hexadecanoyl-sn-glycero-3-phosphocholine + CoA. It carries out the reaction hexanoyl-CoA + 1-hexadecanoyl-sn-glycero-3-phosphocholine = 1-hexadecanoyl-2-hexanoyl-sn-glycero-3-phosphocholine + CoA. The catalysed reaction is octanoyl-CoA + 1-hexadecanoyl-sn-glycero-3-phosphocholine = 1-hexadecanoyl-2-octanoyl-sn-glycero-3-phosphocholine + CoA. It catalyses the reaction decanoyl-CoA + 1-hexadecanoyl-sn-glycero-3-phosphocholine = 1-hexadecanoyl-2-decanoyl-sn-glycero-3-phosphocholine + CoA. The enzyme catalyses dodecanoyl-CoA + 1-hexadecanoyl-sn-glycero-3-phosphocholine = 1-hexadecanoyl-2-dodecanoyl-sn-glycero-3-phosphocholine + CoA. It carries out the reaction tetradecanoyl-CoA + 1-hexadecanoyl-sn-glycero-3-phosphocholine = 1-hexadecanoyl-2-tetradecanoyl-sn-glycero-3-phosphocholine + CoA. The catalysed reaction is 1-hexadecanoyl-sn-glycero-3-phosphocholine + (9Z)-octadecenoyl-CoA = 1-hexadecanoyl-2-(9Z-octadecenoyl)-sn-glycero-3-phosphocholine + CoA. It catalyses the reaction (9Z,12Z)-octadecadienoyl-CoA + 1-hexadecanoyl-sn-glycero-3-phosphocholine = 1-hexadecanoyl-2-(9Z,12Z-octadecadienoyl)-sn-glycero-3-phosphocholine + CoA. The enzyme catalyses (4Z,7Z,10Z,13Z,16Z,19Z)-docosahexaenoyl-CoA + 1-hexadecanoyl-sn-glycero-3-phosphocholine = 1-hexadecanoyl-2-(4Z,7Z,10Z,13Z,16Z,19Z-docosahexaenoyl)-sn-glycero-3-phosphocholine + CoA. It carries out the reaction 1-hexadecanoyl-sn-glycero-3-phosphocholine + acetyl-CoA = 1-hexadecanoyl-2-acetyl-sn-glycero-3-phosphocholine + CoA. The catalysed reaction is eicosanoyl-CoA + 1-hexadecanoyl-sn-glycero-3-phosphocholine = 1-hexadecanoyl-2-eicosanoyl-sn-glycero-3-phosphocholine + CoA. It catalyses the reaction 1-O-hexadecyl-sn-glycero-3-phosphocholine + acetyl-CoA = 1-O-hexadecyl-2-acetyl-sn-glycero-3-phosphocholine + CoA. The enzyme catalyses a 1-acyl-sn-glycero-3-phosphocholine + hexadecanoyl-CoA = 1-acyl-2-hexadecanoyl-sn-glycero-3-phosphocholine + CoA. It carries out the reaction a 1-acyl-sn-glycero-3-phosphate + hexadecanoyl-CoA = 1-acyl-2-hexadecanoyl-sn-glycero-3-phosphate + CoA. The catalysed reaction is 1-acyl-sn-glycero-3-phospho-(1'-sn-glycerol) + hexadecanoyl-CoA = 1-acyl-2-hexadecanoyl-sn-glycero-3-phospho-(1'-sn-glycerol) + CoA. The protein operates within lipid metabolism; phospholipid metabolism. With respect to regulation, not activated by inflammatory stimulation. Inhibited by Cu(2+), Fe(2+), Ca(2+) and Mg(2+). Activity is not affected by Co(2+) or Mn(2+). In terms of biological role, exhibits both acyltransferase and acetyltransferase activities. Activity is calcium-independent. Catalyzes the conversion of lysophosphatidylcholine (1-acyl-sn-glycero-3-phosphocholine or LPC) into phosphatidylcholine (1,2-diacyl-sn-glycero-3-phosphocholine or PC). Catalyzes the conversion 1-acyl-sn-glycerol-3-phosphate (lysophosphatidic acid or LPA) into 1,2-diacyl-sn-glycerol-3-phosphate (phosphatidic acid or PA) by incorporating an acyl moiety at the sn-2 position of the glycerol backbone. Displays a clear preference for saturated fatty acyl-CoAs, and 1-myristoyl or 1-palmitoyl LPC as acyl donors and acceptors, respectively. Involved in platelet-activating factor (PAF) biosynthesis by catalyzing the conversion of the PAF precursor, 1-O-alkyl-sn-glycero-3-phosphocholine (lyso-PAF) into 1-O-alkyl-2-acetyl-sn-glycero-3-phosphocholine (PAF). May synthesize phosphatidylcholine in pulmonary surfactant, thereby playing a pivotal role in respiratory physiology. Involved in the regulation of lipid droplet number and size. The sequence is that of Lysophosphatidylcholine acyltransferase 1 (Lpcat1) from Mus musculus (Mouse).